The following is a 706-amino-acid chain: ABC transporter D family member 2, chloroplastic (706 aa).

The transit peptide at 1–44 (MILMITAPVCPPHLLLRHSSLLRHESSIGNFHRKKNPRFRTVSC) directs the protein to the chloroplast. Position 45 is an N-acetylserine (Ser-45). Transmembrane regions (helical) follow at residues 88 to 108 (LAAVFALTLATTGISVGFNFL), 124 to 144 (FTKQLFYYLCAFAGGIPFFVL), 200 to 222 (TALSFSLTLVNATIDLISFSNIL), 237 to 257 (SFGGTAISVFLGKGLVNLNFL), and 326 to 346 (ILPVAVVAPMYFSGKIEFGVI). The region spanning 88-372 (LAAVFALTLA…VVYQFQAISS (285 aa)) is the ABC transmembrane type-1 domain. One can recognise an ABC transporter domain in the interval 430–697 (LEIEELTLQT…DAQDSLYGRL (268 aa)). 464–471 (GPSGSGKT) is an ATP binding site. Residues 545-569 (TTPGGSNIDGSPPLLIREDGNEKPT) form a disordered region. Basic and acidic residues predominate over residues 560–569 (IREDGNEKPT).

It belongs to the ABC transporter superfamily. ABCD family. Peroxisomal fatty acyl CoA transporter (TC 3.A.1.203) subfamily. As to quaternary structure, homodimer or heterodimer.

It is found in the membrane. Its subcellular location is the plastid. It localises to the chloroplast. The sequence is that of ABC transporter D family member 2, chloroplastic (ABCC2) from Arabidopsis thaliana (Mouse-ear cress).